We begin with the raw amino-acid sequence, 457 residues long: Cysteine--tRNA ligase (457 aa).

Position 27 (cysteine 27) interacts with Zn(2+). The 'HIGH' region motif lies at 29-39 (ITPQSEPHIGH). Zn(2+) is bound by residues cysteine 207, histidine 232, and glutamate 236. Residues 265–269 (KMSKS) carry the 'KMSKS' region motif. Lysine 268 is a binding site for ATP.

The protein belongs to the class-I aminoacyl-tRNA synthetase family. In terms of assembly, monomer. Zn(2+) is required as a cofactor.

The protein resides in the cytoplasm. It carries out the reaction tRNA(Cys) + L-cysteine + ATP = L-cysteinyl-tRNA(Cys) + AMP + diphosphate. The polypeptide is Cysteine--tRNA ligase (Dehalococcoides mccartyi (strain ATCC BAA-2100 / JCM 16839 / KCTC 5957 / BAV1)).